The following is a 203-amino-acid chain: ATP-dependent Clp protease proteolytic subunit (203 aa).

Ser-107 functions as the Nucleophile in the catalytic mechanism. Residue His-132 is part of the active site.

Belongs to the peptidase S14 family. As to quaternary structure, fourteen ClpP subunits assemble into 2 heptameric rings which stack back to back to give a disk-like structure with a central cavity, resembling the structure of eukaryotic proteasomes.

The protein resides in the cytoplasm. The enzyme catalyses Hydrolysis of proteins to small peptides in the presence of ATP and magnesium. alpha-casein is the usual test substrate. In the absence of ATP, only oligopeptides shorter than five residues are hydrolyzed (such as succinyl-Leu-Tyr-|-NHMec, and Leu-Tyr-Leu-|-Tyr-Trp, in which cleavage of the -Tyr-|-Leu- and -Tyr-|-Trp bonds also occurs).. Cleaves peptides in various proteins in a process that requires ATP hydrolysis. Has a chymotrypsin-like activity. Plays a major role in the degradation of misfolded proteins. This chain is ATP-dependent Clp protease proteolytic subunit, found in Thermotoga maritima (strain ATCC 43589 / DSM 3109 / JCM 10099 / NBRC 100826 / MSB8).